The primary structure comprises 162 residues: uncharacterized protein (162 aa).

A run of 4 helical transmembrane segments spans residues valine 15 to leucine 35, valine 43 to serine 63, leucine 70 to leucine 90, and leucine 97 to tyrosine 117.

It is found in the membrane. This is an uncharacterized protein from Schizosaccharomyces pombe (strain 972 / ATCC 24843) (Fission yeast).